The primary structure comprises 470 residues: Putative multidrug resistance protein MdtD (470 aa).

The Periplasmic segment spans residues 1 to 11 (MTELPDNTRWQ). The helical transmembrane segment at 12-32 (LWIVAFGFFMQSLDTTIVNTA) threads the bilayer. Residues 33-48 (LPSMAKSLGESPLHMH) are Cytoplasmic-facing. A helical membrane pass occupies residues 49–69 (MVVVSYVLTVAVMLPASGWLA). The Periplasmic segment spans residues 70-76 (DKIGVRN). Residues 77 to 97 (IFFAAIVLFTLGSLFCALSGT) traverse the membrane as a helical segment. At 98–101 (LNQL) the chain is on the cytoplasmic side. Residues 102–124 (VLARVLQGVGGAMMVPVGRLTVM) traverse the membrane as a helical segment. Residues 125 to 137 (KIVPRTQYMAAMT) lie on the Periplasmic side of the membrane. Residues 138-158 (FVTLPGQIGPLLGPALGGVLV) traverse the membrane as a helical segment. The Cytoplasmic segment spans residues 159–164 (EYASWH). Residues 165 to 185 (WIFLINIPVGIVGAMATFMLM) traverse the membrane as a helical segment. Residues 186-196 (PNYTIETRRFD) are Periplasmic-facing. Residues 197-217 (LPGFLLLAIGMAVLTLALDGS) traverse the membrane as a helical segment. The Cytoplasmic portion of the chain corresponds to 218–224 (KSMGISP). The chain crosses the membrane as a helical span at residues 225–245 (WTLAGLAAGGAAAILLYLFHA). The Periplasmic segment spans residues 246 to 262 (KKNSGALFSLRLFRTPT). Residues 263-283 (FSLGLLGSFAGRIGSGMLPFM) form a helical membrane-spanning segment. The Cytoplasmic segment spans residues 284-285 (TP). Residues 286-306 (VFLQIGLGFSPFHAGLMMIPM) traverse the membrane as a helical segment. Residues 307-341 (VLGSMGMKRIVVQIVNRFGYRRVLVATTLGLALVS) lie on the Periplasmic side of the membrane. A helical transmembrane segment spans residues 342–362 (LLFMSVALLGWYYLLPLVLLL). Residues 363-395 (QGMVNSARFSSMNTLTLKDLPDTLASSGNSLLS) are Cytoplasmic-facing. A helical transmembrane segment spans residues 396 to 416 (MIMQLSMSIGVTIAGMLLGMF). Topologically, residues 417-430 (GQQHIGIDSSATHH) are periplasmic. The helical transmembrane segment at 431–451 (VFMYTWLCMAVIIALPAIIFA) threads the bilayer. At 452–470 (RVPNDTQQNMVISRRKRSL) the chain is on the cytoplasmic side.

The protein belongs to the major facilitator superfamily. TCR/Tet family.

It localises to the cell inner membrane. The chain is Putative multidrug resistance protein MdtD from Salmonella dublin (strain CT_02021853).